Here is a 289-residue protein sequence, read N- to C-terminus: Putative 2-aminoethylphosphonate transport system permease protein PhnU (289 aa).

6 helical membrane passes run 19–39 (WLLL…SLIV), 76–96 (FFAT…LVFI), 111–131 (FIAL…GSAG), 150–170 (FLYS…PLVM), 202–222 (VIFP…LLLT), and 254–274 (YTVA…LFSL). Positions 68–275 (LLNTLQIAFF…VLSLGLFSLY (208 aa)) constitute an ABC transmembrane type-1 domain.

The protein belongs to the binding-protein-dependent transport system permease family.

It is found in the cell inner membrane. Probably part of the PhnSTUV complex (TC 3.A.1.11.5) involved in 2-aminoethylphosphonate import. Probably responsible for the translocation of the substrate across the membrane. This chain is Putative 2-aminoethylphosphonate transport system permease protein PhnU (phnU), found in Salmonella typhi.